Reading from the N-terminus, the 500-residue chain is Bifunctional protein GlmU (500 aa).

Positions 1–242 (MPVQTAVVVL…SAKVAGANDR (242 aa)) are pyrophosphorylase. Residues 10–13 (LAAG), Lys-24, Gln-81, and 86–87 (GT) contribute to the UDP-N-acetyl-alpha-D-glucosamine site. Asp-112 contributes to the Mg(2+) binding site. Residues Gly-151, Glu-167, Asn-182, and Asn-240 each contribute to the UDP-N-acetyl-alpha-D-glucosamine site. Asn-240 serves as a coordination point for Mg(2+). Positions 243-263 (VQLSRLAAELNRRTVENWMRA) are linker. The interval 264–500 (GVTVVDPSTT…KQDLKDGIEQ (237 aa)) is N-acetyltransferase. UDP-N-acetyl-alpha-D-glucosamine-binding residues include Arg-345 and Lys-363. The active-site Proton acceptor is His-375. Tyr-378 and Asn-389 together coordinate UDP-N-acetyl-alpha-D-glucosamine. Acetyl-CoA is bound by residues Ala-392, 398 to 399 (NY), Ser-417, and Ala-435. The tract at residues 472 to 500 (AEAAAAAGLHHSSDLHETEKQDLKDGIEQ) is disordered. The span at 482–500 (HSSDLHETEKQDLKDGIEQ) shows a compositional bias: basic and acidic residues.

The protein in the N-terminal section; belongs to the N-acetylglucosamine-1-phosphate uridyltransferase family. It in the C-terminal section; belongs to the transferase hexapeptide repeat family. As to quaternary structure, homotrimer. Mg(2+) is required as a cofactor.

It is found in the cytoplasm. The catalysed reaction is alpha-D-glucosamine 1-phosphate + acetyl-CoA = N-acetyl-alpha-D-glucosamine 1-phosphate + CoA + H(+). It catalyses the reaction N-acetyl-alpha-D-glucosamine 1-phosphate + UTP + H(+) = UDP-N-acetyl-alpha-D-glucosamine + diphosphate. It participates in nucleotide-sugar biosynthesis; UDP-N-acetyl-alpha-D-glucosamine biosynthesis; N-acetyl-alpha-D-glucosamine 1-phosphate from alpha-D-glucosamine 6-phosphate (route II): step 2/2. The protein operates within nucleotide-sugar biosynthesis; UDP-N-acetyl-alpha-D-glucosamine biosynthesis; UDP-N-acetyl-alpha-D-glucosamine from N-acetyl-alpha-D-glucosamine 1-phosphate: step 1/1. It functions in the pathway bacterial outer membrane biogenesis; LPS lipid A biosynthesis. Functionally, catalyzes the last two sequential reactions in the de novo biosynthetic pathway for UDP-N-acetylglucosamine (UDP-GlcNAc). The C-terminal domain catalyzes the transfer of acetyl group from acetyl coenzyme A to glucosamine-1-phosphate (GlcN-1-P) to produce N-acetylglucosamine-1-phosphate (GlcNAc-1-P), which is converted into UDP-GlcNAc by the transfer of uridine 5-monophosphate (from uridine 5-triphosphate), a reaction catalyzed by the N-terminal domain. The sequence is that of Bifunctional protein GlmU from Rhodococcus jostii (strain RHA1).